The chain runs to 1001 residues: Transcription-repair-coupling factor (1001 aa).

Positions 499–658 (DLSSHRVMDR…LSQIKGISSL (160 aa)) constitute a Helicase ATP-binding domain. 512 to 519 (GDVGFGKT) lines the ATP pocket. The short motif at 611–614 (DEEH) is the DEEH box element. The 157-residue stretch at 679–835 (LLKEIIYREL…SIAYHDLEIR (157 aa)) folds into the Helicase C-terminal domain.

In the N-terminal section; belongs to the UvrB family. It in the C-terminal section; belongs to the helicase family. RecG subfamily.

It localises to the cytoplasm. In terms of biological role, couples transcription and DNA repair by recognizing RNA polymerase (RNAP) stalled at DNA lesions. Mediates ATP-dependent release of RNAP and its truncated transcript from the DNA, and recruitment of nucleotide excision repair machinery to the damaged site. The sequence is that of Transcription-repair-coupling factor from Helicobacter pylori (strain J99 / ATCC 700824) (Campylobacter pylori J99).